The sequence spans 129 residues: Protein Turandot C (129 aa).

Residues 1–21 (MNASISLLCFALLLISPFCLG) form the signal peptide.

Belongs to the Turandot family.

Its subcellular location is the secreted. A humoral factor that may play a role in stress tolerance. This Drosophila sechellia (Fruit fly) protein is Protein Turandot C.